The sequence spans 336 residues: Ornithine carbamoyltransferase, catabolic (336 aa).

Residues 57–60 (STRT), Gln-84, Arg-108, and 135–138 (HPTQ) contribute to the carbamoyl phosphate site. Residues Asn-168, Asp-232, and 236-237 (SM) each bind L-ornithine. Residues 274-275 (CL) and Arg-321 each bind carbamoyl phosphate.

It belongs to the aspartate/ornithine carbamoyltransferase superfamily. OTCase family.

The protein localises to the cytoplasm. The catalysed reaction is carbamoyl phosphate + L-ornithine = L-citrulline + phosphate + H(+). It functions in the pathway amino-acid degradation; L-arginine degradation via ADI pathway; carbamoyl phosphate from L-arginine: step 2/2. In terms of biological role, reversibly catalyzes the transfer of the carbamoyl group from carbamoyl phosphate (CP) to the N(epsilon) atom of ornithine (ORN) to produce L-citrulline. This Burkholderia mallei (strain ATCC 23344) protein is Ornithine carbamoyltransferase, catabolic.